The chain runs to 599 residues: Omega-hydroxyceramide transacylase (599 aa).

The 170-residue stretch at 16 to 185 (ISFSGSGFLS…TSMQPCSFWT (170 aa)) folds into the PNPLA domain. Residues 51–55 (GTSAG) carry the GXSXG motif. S53 functions as the Nucleophile in the catalytic mechanism. The active-site Proton acceptor is the D172. Positions 172 to 174 (DGG) match the DGA/G motif. The disordered stretch occupies residues 289-563 (PPPPSLQNLP…PASKLKSAPC (275 aa)). 2 stretches are compositionally biased toward polar residues: residues 325–335 (SSAAPSVQTPE) and 350–362 (VSIS…SPLS). The span at 443–454 (SPESPRLLLRSS) shows a compositional bias: low complexity. Residues 468–478 (PLSPSTPPAGP) are compositionally biased toward pro residues. Positions 490 to 501 (ATGSPALSQLTG) are enriched in polar residues. The segment covering 551-563 (SKKPASKLKSAPC) has biased composition (low complexity).

In terms of tissue distribution, specifically expressed in skin by keratinocytes, at the boundary area between the nucleated stratum granulosum and the denucleated stratum corneum in the epidermis (at protein level). Also expressed in stomach and other surface lining tissues like intestine and tongue. Also detected in testis as well as in other tissues but at very low level.

The protein localises to the cytoplasm. It carries out the reaction an N-(omega-hydroxy-ultra-long chain fatty acyl)-sphingoid base + a (9Z,12Z)-octadecadienoyl-containing triacyl-sn-glycerol = an N-[omega-(9Z,12Z-octadecadienoyloxy)-O-ultra-long chain fatty acyl]-sphingoid base + a diacylglycerol. It catalyses the reaction an N-(omega-hydroxy-ultra-long chain fatty acyl)-sphing-4-enine + a (9Z,12Z)-octadecadienoyl-containing triacyl-sn-glycerol = an N-(omega-(9Z,12Z-octadecadienoyloxy)-ultra-long chain fatty acyl)-sphing-4-enine + a diacylglycerol. The catalysed reaction is N-(28-hydroxyoctacosanoyl)-sphing-4-enine + a (9Z,12Z)-octadecadienoyl-containing triacyl-sn-glycerol = N-(28-(9Z,12Z-octadecadienoyloxy)-octacosanoyl)-sphing-4-enine + a diacylglycerol. The enzyme catalyses N-(30-hydroxytriacontanoyl)-sphing-4-enine + 1,2,3-tri-(9Z,12Z)-octadecadienoylglycerol = N-[30-(9Z,12Z-octadecadienoyloxy)-triacontanoyl]-sphing-4-enine + di-(9Z,12Z)-octadecadienoylglycerol. It carries out the reaction N-(32-hydroxydotriacontanoyl)-sphing-4-enine + a (9Z,12Z)-octadecadienoyl-containing triacyl-sn-glycerol = N-(32-(9Z,12Z-octadecadienoyloxy)-dotricontanoyl)-sphing-4-enine + a diacylglycerol. It catalyses the reaction N-(32-hydroxydotriacontenoyl)-sphing-4-enine + a (9Z,12Z)-octadecadienoyl-containing triacyl-sn-glycerol = an N-(32-(9Z,12Z-octadecadienoyloxy)-dotriacontenoyl)-sphing-4-enine + a diacylglycerol. The catalysed reaction is an N-(34-hydroxytetratriacontenoyl)-sphing-4-enine + a (9Z,12Z)-octadecadienoyl-containing triacyl-sn-glycerol = an N-(34-(9Z,12Z-octadecadienoyloxy)-tetratriacontenoyl)-sphing-4-enine + a diacylglycerol. The enzyme catalyses an N-(34-hydroxytetratriacontadienoyl)-sphing-4-enine + a (9Z,12Z)-octadecadienoyl-containing triacyl-sn-glycerol = an N-(34-(9Z,12Z-octadecadienoyloxy)-tetratriacontadienoyl)-sphing-4-enine + a diacylglycerol. It carries out the reaction an N-(36-hydroxyhexatriacontenoyl)-sphing-4-enine + a (9Z,12Z)-octadecadienoyl-containing triacyl-sn-glycerol = an N-(36-(9Z,12Z-octadecadienoyloxy)-hexatriacontenoyl)-sphing-4-enine + a diacylglycerol. It catalyses the reaction an N-(36-hydroxyhexatriacontadienoyl)-sphing-4-enine + a (9Z,12Z)-octadecadienoyl-containing triacyl-sn-glycerol = an N-(36-(9Z,12Z-octadecadienoyloxy)-hexatriacontadienoyl)-sphing-4-enine + a diacylglycerol. The catalysed reaction is an N-(38-hydroxyoctatriacontenoyl)-sphing-4-enine + a (9Z,12Z)-octadecadienoyl-containing triacyl-sn-glycerol = an N-(38-(9Z,12Z-octadecadienoyloxy)-octatriacontenoyl)-sphing-4-enine + a diacylglycerol. In terms of biological role, omega-hydroxyceramide transacylase involved in the synthesis of omega-O-acylceramides (esterified omega-hydroxyacyl-sphingosine; EOS), which are extremely hydrophobic lipids involved in skin barrier formation. Catalyzes the last step of the synthesis of omega-O-acylceramides by transferring linoleic acid from triglycerides to an omega-hydroxyceramide. Omega-O-acylceramides, are required for the biogenesis of lipid lamellae in the stratum corneum and the formation of the cornified lipid envelope which are essential for the epidermis barrier function. These lipids also play a role in keratinocyte differentiation. May also act on omega-hydroxylated ultra-long chain fatty acids (omega-OH ULCFA) and acylglucosylceramides (GlcEOS). The sequence is that of Omega-hydroxyceramide transacylase from Mus musculus (Mouse).